Reading from the N-terminus, the 65-residue chain is Small ribosomal subunit protein eS27 (65 aa).

4 residues coordinate Zn(2+): cysteine 20, cysteine 23, cysteine 39, and cysteine 42. The C4-type zinc finger occupies 20–42; that stretch reads CIDCGNEQIVFSHPATPVRCLVC.

This sequence belongs to the eukaryotic ribosomal protein eS27 family. In terms of assembly, part of the 30S ribosomal subunit. Zn(2+) serves as cofactor.

The polypeptide is Small ribosomal subunit protein eS27 (Thermococcus kodakarensis (strain ATCC BAA-918 / JCM 12380 / KOD1) (Pyrococcus kodakaraensis (strain KOD1))).